The chain runs to 364 residues: SVP1-like protein 2 (364 aa).

WD repeat units follow at residues 173-213 and 218-257; these read AHDS…KICE and YQHTAVCQLAFSPDELLLACASKKETLHIFSLHGSPNTIR.

The protein belongs to the WD repeat PROPPIN family.

The protein localises to the vacuole membrane. Its subcellular location is the cytoplasmic vesicle membrane. It localises to the preautophagosomal structure membrane. Functionally, involved in mitochondrial or peroxisomal functions and amino acid signaling pathways. The chain is SVP1-like protein 2 (hsv2) from Schizosaccharomyces pombe (strain 972 / ATCC 24843) (Fission yeast).